The sequence spans 612 residues: FAD-linked oxidoreductase easE (612 aa).

One can recognise an FAD-binding PCMH-type domain in the interval 129–313 (HQGRIPLYSA…TRATMRVFPD (185 aa)).

It belongs to the oxygen-dependent FAD-linked oxidoreductase family. It depends on FAD as a cofactor.

It participates in alkaloid biosynthesis; ergot alkaloid biosynthesis. Functionally, FAD-linked oxidoreductase; part of the gene cluster that mediates the biosynthesis of fungal ergot alkaloid. DmaW catalyzes the first step of ergot alkaloid biosynthesis by condensing dimethylallyl diphosphate (DMAP) and tryptophan to form 4-dimethylallyl-L-tryptophan. The second step is catalyzed by the methyltransferase easF that methylates 4-dimethylallyl-L-tryptophan in the presence of S-adenosyl-L-methionine, resulting in the formation of 4-dimethylallyl-L-abrine. The catalase easC and the FAD-dependent oxidoreductase easE then transform 4-dimethylallyl-L-abrine to chanoclavine-I which is further oxidized by easD in the presence of NAD(+), resulting in the formation of chanoclavine-I aldehyde. Chanoclavine-I aldehyde is the precursor of ergoamides and ergopeptines in Clavicipitaceae, and clavine-type alcaloids such as fumiclavine in Trichocomaceae. However, the metabolites downstream of chanoclavine-I aldehyde in Arthrodermataceae have not been identified yet. This is FAD-linked oxidoreductase easE from Arthroderma otae (strain ATCC MYA-4605 / CBS 113480) (Microsporum canis).